The sequence spans 324 residues: tRNA pseudouridine synthase B (324 aa).

The Nucleophile role is filled by Asp-49. Residues 87-107 (RSTDDLEGQPTKTSDKRPSRE) form a disordered region.

Belongs to the pseudouridine synthase TruB family. Type 1 subfamily.

It carries out the reaction uridine(55) in tRNA = pseudouridine(55) in tRNA. Responsible for synthesis of pseudouridine from uracil-55 in the psi GC loop of transfer RNAs. This chain is tRNA pseudouridine synthase B, found in Brucella canis (strain ATCC 23365 / NCTC 10854 / RM-666).